A 286-amino-acid chain; its full sequence is Transcription initiation factor IIA large subunit (286 aa).

Disordered stretches follow at residues 120 to 145 (NTVE…ADVT), 167 to 195 (TVEN…KEKE), and 208 to 236 (KRSA…EGEE). Basic and acidic residues predominate over residues 175–195 (SEKKDDEEKEEDVEKTRKEKE). Positions 214-236 (DTDEVGSELDDSDDDYLISEGEE) are enriched in acidic residues.

This sequence belongs to the TFIIA subunit 1 family. TFIIA is a heterodimer composed of the large TOA1 and a small TOA2 subunits. Interacts with KAP122.

The protein resides in the cytoplasm. The protein localises to the nucleus. In terms of biological role, TFIIA is a component of the transcription machinery of RNA polymerase II and implicated in the regulation of basal transcription. Interacts with TBP (the TATA-binding protein). The chain is Transcription initiation factor IIA large subunit (TOA1) from Saccharomyces cerevisiae (strain ATCC 204508 / S288c) (Baker's yeast).